The following is a 261-amino-acid chain: Chitinase 8 (261 aa).

A signal peptide spans 1–29; sequence MTTTTTRFVQLAACAAASLLAVAASGAAA. Cystine bridges form between cysteine 53–cysteine 115 and cysteine 221–cysteine 253. Catalysis depends on glutamate 98, which acts as the Proton donor.

The protein belongs to the glycosyl hydrolase 19 family. Chitinase class II subfamily. As to expression, expressed in roots, leaves, sheaths and meristems.

It catalyses the reaction Random endo-hydrolysis of N-acetyl-beta-D-glucosaminide (1-&gt;4)-beta-linkages in chitin and chitodextrins.. This chain is Chitinase 8 (Cht8), found in Oryza sativa subsp. japonica (Rice).